Here is a 178-residue protein sequence, read N- to C-terminus: Glucagon-2 (178 aa).

The first 21 residues, 1–21 (MFGIHSLAGVLLLVIVQSQLA), serve as a signal peptide directing secretion. 3 propeptides span residues 83–87 (SGAPS), 123–134 (ESAEESMNGPMS), and 171–178 (SNKRQEDH).

The protein belongs to the glucagon family.

The protein resides in the secreted. Promotes hydrolysis of glycogen and lipids, and raises the blood sugar level. The sequence is that of Glucagon-2 (gcg2) from Oncorhynchus mykiss (Rainbow trout).